We begin with the raw amino-acid sequence, 82 residues long: Small ribosomal subunit protein bS18 (82 aa).

Positions 1–24 (MKRTNMKKARMEQSRRPKKNPLKA) are disordered.

The protein belongs to the bacterial ribosomal protein bS18 family. In terms of assembly, part of the 30S ribosomal subunit. Forms a tight heterodimer with protein bS6.

In terms of biological role, binds as a heterodimer with protein bS6 to the central domain of the 16S rRNA, where it helps stabilize the platform of the 30S subunit. This chain is Small ribosomal subunit protein bS18, found in Corynebacterium jeikeium (strain K411).